We begin with the raw amino-acid sequence, 348 residues long: Phospho-N-acetylmuramoyl-pentapeptide-transferase (348 aa).

The next 10 helical transmembrane spans lie at 11–31 (SWML…IFLG), 68–88 (AGGI…LPLG), 92–112 (TWLF…DDII), 128–148 (FVIQ…IYKG), 165–185 (VGHS…TIVG), 196–216 (LDGL…VVAL), 222–242 (PLAQ…FAFL), 251–271 (VFMG…CAVM), 276–296 (LLLI…ILQV), and 326–346 (VVAR…IAAL).

Belongs to the glycosyltransferase 4 family. MraY subfamily. It depends on Mg(2+) as a cofactor.

The protein localises to the cell inner membrane. It carries out the reaction UDP-N-acetyl-alpha-D-muramoyl-L-alanyl-gamma-D-glutamyl-meso-2,6-diaminopimeloyl-D-alanyl-D-alanine + di-trans,octa-cis-undecaprenyl phosphate = di-trans,octa-cis-undecaprenyl diphospho-N-acetyl-alpha-D-muramoyl-L-alanyl-D-glutamyl-meso-2,6-diaminopimeloyl-D-alanyl-D-alanine + UMP. It participates in cell wall biogenesis; peptidoglycan biosynthesis. Its function is as follows. Catalyzes the initial step of the lipid cycle reactions in the biosynthesis of the cell wall peptidoglycan: transfers peptidoglycan precursor phospho-MurNAc-pentapeptide from UDP-MurNAc-pentapeptide onto the lipid carrier undecaprenyl phosphate, yielding undecaprenyl-pyrophosphoryl-MurNAc-pentapeptide, known as lipid I. This is Phospho-N-acetylmuramoyl-pentapeptide-transferase from Chlamydia caviae (strain ATCC VR-813 / DSM 19441 / 03DC25 / GPIC) (Chlamydophila caviae).